We begin with the raw amino-acid sequence, 557 residues long: Dihydroxy-acid dehydratase (557 aa).

D78 lines the Mg(2+) pocket. C119 provides a ligand contact to [2Fe-2S] cluster. D120 and K121 together coordinate Mg(2+). Position 121 is an N6-carboxylysine (K121). Residue C191 participates in [2Fe-2S] cluster binding. Residue E442 coordinates Mg(2+). Catalysis depends on S468, which acts as the Proton acceptor.

It belongs to the IlvD/Edd family. As to quaternary structure, homodimer. [2Fe-2S] cluster is required as a cofactor. It depends on Mg(2+) as a cofactor.

The catalysed reaction is (2R)-2,3-dihydroxy-3-methylbutanoate = 3-methyl-2-oxobutanoate + H2O. The enzyme catalyses (2R,3R)-2,3-dihydroxy-3-methylpentanoate = (S)-3-methyl-2-oxopentanoate + H2O. It functions in the pathway amino-acid biosynthesis; L-isoleucine biosynthesis; L-isoleucine from 2-oxobutanoate: step 3/4. It participates in amino-acid biosynthesis; L-valine biosynthesis; L-valine from pyruvate: step 3/4. Its function is as follows. Functions in the biosynthesis of branched-chain amino acids. Catalyzes the dehydration of (2R,3R)-2,3-dihydroxy-3-methylpentanoate (2,3-dihydroxy-3-methylvalerate) into 2-oxo-3-methylpentanoate (2-oxo-3-methylvalerate) and of (2R)-2,3-dihydroxy-3-methylbutanoate (2,3-dihydroxyisovalerate) into 2-oxo-3-methylbutanoate (2-oxoisovalerate), the penultimate precursor to L-isoleucine and L-valine, respectively. This chain is Dihydroxy-acid dehydratase, found in Syntrophobacter fumaroxidans (strain DSM 10017 / MPOB).